Reading from the N-terminus, the 213-residue chain is Type II restriction enzyme BamHI (213 aa).

Mg(2+) is bound by residues Glu77, Asp94, Glu111, and Phe112. Glu113 (proton acceptor) is an active-site residue.

In terms of assembly, homodimer. Mg(2+) is required as a cofactor.

It catalyses the reaction Endonucleolytic cleavage of DNA to give specific double-stranded fragments with terminal 5'-phosphates.. Functionally, a P subtype restriction enzyme that recognizes the double-stranded sequence 5'-GGATCC-3' and cleaves after G-1. This chain is Type II restriction enzyme BamHI, found in Bacillus amyloliquefaciens (Bacillus velezensis).